We begin with the raw amino-acid sequence, 191 residues long: Fe/S biogenesis protein NfuA (191 aa).

[4Fe-4S] cluster is bound by residues cysteine 149 and cysteine 152.

Belongs to the NfuA family. In terms of assembly, homodimer. Requires [4Fe-4S] cluster as cofactor.

In terms of biological role, involved in iron-sulfur cluster biogenesis. Binds a 4Fe-4S cluster, can transfer this cluster to apoproteins, and thereby intervenes in the maturation of Fe/S proteins. Could also act as a scaffold/chaperone for damaged Fe/S proteins. This chain is Fe/S biogenesis protein NfuA, found in Pectobacterium carotovorum subsp. carotovorum (strain PC1).